Here is a 104-residue protein sequence, read N- to C-terminus: UPF0235 protein Paes_1868 (104 aa).

It belongs to the UPF0235 family.

The protein is UPF0235 protein Paes_1868 of Prosthecochloris aestuarii (strain DSM 271 / SK 413).